A 256-amino-acid polypeptide reads, in one-letter code: Putative ankyrin repeat protein FPV231 (256 aa).

ANK repeat units follow at residues 1–20 (MFGNTTISKMLLDYGARIDS), 24–53 (EECLPLNHAIATNNKELTSLFLARGADTNI), 57–86 (YNRSVLHKAIGNNNITSVKLLLNHGIDYNL), 90–119 (HGYTALHYAITLQNREITDMLLSSGADPNI), and 123–151 (EKHTPLYHALLYRSSNVESLILHGADINI).

In Vertebrata (FPV), this protein is Putative ankyrin repeat protein FPV231.